The primary structure comprises 134 residues: Small ribosomal subunit protein uS8 (134 aa).

Belongs to the universal ribosomal protein uS8 family. Part of the 30S ribosomal subunit. Contacts proteins S5 and S12.

One of the primary rRNA binding proteins, it binds directly to 16S rRNA central domain where it helps coordinate assembly of the platform of the 30S subunit. The protein is Small ribosomal subunit protein uS8 of Synechococcus sp. (strain JA-3-3Ab) (Cyanobacteria bacterium Yellowstone A-Prime).